A 494-amino-acid chain; its full sequence is Serine/threonine-protein kinase cst-1 (494 aa).

Residues M1 to L27 are disordered. The 252-residue stretch at F35–I286 folds into the Protein kinase domain. Residues L41–V49 and K64 contribute to the ATP site. The Proton acceptor role is filled by D154. The disordered stretch occupies residues I364–E413. Polar residues predominate over residues Y369–P378. The region spanning F443–K490 is the SARAH domain.

This sequence belongs to the protein kinase superfamily. STE Ser/Thr protein kinase family. STE20 subfamily. Mg(2+) serves as cofactor. In terms of processing, proteolytically cleaved by caspase-3 during apoptosis which results in kinase activation.

It catalyses the reaction L-seryl-[protein] + ATP = O-phospho-L-seryl-[protein] + ADP + H(+). The enzyme catalyses L-threonyl-[protein] + ATP = O-phospho-L-threonyl-[protein] + ADP + H(+). In terms of biological role, serine/threonine-protein kinase which extends lifespan and delays tissue aging, probably by activating daf-16. In Caenorhabditis briggsae, this protein is Serine/threonine-protein kinase cst-1 (cst-1).